A 387-amino-acid chain; its full sequence is 8-amino-7-oxononanoate synthase (387 aa).

Substrate is bound at residue arginine 19. Residue 106–107 (GY) participates in pyridoxal 5'-phosphate binding. Histidine 131 lines the substrate pocket. Residues serine 177, histidine 205, and threonine 234 each coordinate pyridoxal 5'-phosphate. Lysine 237 is subject to N6-(pyridoxal phosphate)lysine. Threonine 351 contributes to the substrate binding site.

Belongs to the class-II pyridoxal-phosphate-dependent aminotransferase family. BioF subfamily. Homodimer. Requires pyridoxal 5'-phosphate as cofactor.

The enzyme catalyses 6-carboxyhexanoyl-[ACP] + L-alanine + H(+) = (8S)-8-amino-7-oxononanoate + holo-[ACP] + CO2. Its pathway is cofactor biosynthesis; biotin biosynthesis. Functionally, catalyzes the decarboxylative condensation of pimeloyl-[acyl-carrier protein] and L-alanine to produce 8-amino-7-oxononanoate (AON), [acyl-carrier protein], and carbon dioxide. This chain is 8-amino-7-oxononanoate synthase, found in Methylococcus capsulatus (strain ATCC 33009 / NCIMB 11132 / Bath).